The chain runs to 61 residues: MELITELFDGASAPVVTLNPKHKIPQIFAIQAGEESVLPGFRFCTYTSGGDTNKTLNQAIK.

This is an uncharacterized protein from Enterobacteria phage T4 (Bacteriophage T4).